The primary structure comprises 476 residues: MTWETVIGLEIHVQLNTKSKIFSGASTAFGAEPNAHASVVECALPGVLPVMNREVVEKAIKLGLALDAKINRKNVFDRKNYFYPDLPKGYQISQLDLPIVEHGKLEIVVGGDVKTINVTRAHMEEDAGKSVHEGLNGATGIDLNRAGTPLLEVVSEPEMRSAAEAVAYAKALHSLVTWLDICDGNMAEGSFRIDANVSVRPKGQAEFGTRREIKNLNSFRFLDQAINYEAEAQIEILEDGGTVQQATMLFDPEKGETRVMRLKEDAHDYGYFPDPDLLPVIISDAQMQKAKAEMPELPKEMAARFVADYGVSEYDARLLTASRVQAAYFEEAAKESGQGKPTANWMNGELAATLNKEGMELADSPITAPRLAALVGKIADGTLSGKLAKKAFEAMWAEPETSIAEIIEKHSLQQMTDTGAVEAMVDEVLANNAKAVEQFKSGNEKALNAIVGQVMKTSKGKANPAQVQELIKAKLA.

The protein belongs to the GatB/GatE family. GatB subfamily. As to quaternary structure, heterotrimer of A, B and C subunits.

It catalyses the reaction L-glutamyl-tRNA(Gln) + L-glutamine + ATP + H2O = L-glutaminyl-tRNA(Gln) + L-glutamate + ADP + phosphate + H(+). It carries out the reaction L-aspartyl-tRNA(Asn) + L-glutamine + ATP + H2O = L-asparaginyl-tRNA(Asn) + L-glutamate + ADP + phosphate + 2 H(+). Allows the formation of correctly charged Asn-tRNA(Asn) or Gln-tRNA(Gln) through the transamidation of misacylated Asp-tRNA(Asn) or Glu-tRNA(Gln) in organisms which lack either or both of asparaginyl-tRNA or glutaminyl-tRNA synthetases. The reaction takes place in the presence of glutamine and ATP through an activated phospho-Asp-tRNA(Asn) or phospho-Glu-tRNA(Gln). This is Aspartyl/glutamyl-tRNA(Asn/Gln) amidotransferase subunit B from Neisseria gonorrhoeae (strain ATCC 700825 / FA 1090).